The following is a 152-amino-acid chain: Ribosome maturation factor RimP (152 aa).

The protein belongs to the RimP family.

It is found in the cytoplasm. Its function is as follows. Required for maturation of 30S ribosomal subunits. This chain is Ribosome maturation factor RimP, found in Aeromonas hydrophila subsp. hydrophila (strain ATCC 7966 / DSM 30187 / BCRC 13018 / CCUG 14551 / JCM 1027 / KCTC 2358 / NCIMB 9240 / NCTC 8049).